Reading from the N-terminus, the 124-residue chain is Large ribosomal subunit protein uL18 (124 aa).

The protein belongs to the universal ribosomal protein uL18 family. In terms of assembly, part of the 50S ribosomal subunit; part of the 5S rRNA/L5/L18/L25 subcomplex. Contacts the 5S and 23S rRNAs.

Functionally, this is one of the proteins that bind and probably mediate the attachment of the 5S RNA into the large ribosomal subunit, where it forms part of the central protuberance. This is Large ribosomal subunit protein uL18 from Koribacter versatilis (strain Ellin345).